Reading from the N-terminus, the 131-residue chain is Glycine cleavage system H protein (131 aa).

In terms of domain architecture, Lipoyl-binding spans 24-106; the sequence is RVTVGISDHA…YGDGWMYVVE (83 aa). Residue K65 is modified to N6-lipoyllysine.

The protein belongs to the GcvH family. In terms of assembly, the glycine cleavage system is composed of four proteins: P, T, L and H. Requires (R)-lipoate as cofactor.

Its function is as follows. The glycine cleavage system catalyzes the degradation of glycine. The H protein shuttles the methylamine group of glycine from the P protein to the T protein. The chain is Glycine cleavage system H protein from Stenotrophomonas maltophilia (strain R551-3).